Reading from the N-terminus, the 211-residue chain is LexA repressor (211 aa).

The H-T-H motif DNA-binding region spans 28–48; that stretch reads VREVGEAVGLSSSSTIHGHIE. Residues Ser132 and Lys170 each act as for autocatalytic cleavage activity in the active site.

It belongs to the peptidase S24 family. As to quaternary structure, homodimer.

The enzyme catalyses Hydrolysis of Ala-|-Gly bond in repressor LexA.. Functionally, represses a number of genes involved in the response to DNA damage (SOS response), including recA and lexA. In the presence of single-stranded DNA, RecA interacts with LexA causing an autocatalytic cleavage which disrupts the DNA-binding part of LexA, leading to derepression of the SOS regulon and eventually DNA repair. This chain is LexA repressor, found in Leuconostoc citreum (strain KM20).